Consider the following 224-residue polypeptide: Magnesium-protoporphyrin O-methyltransferase (224 aa).

This sequence belongs to the class I-like SAM-binding methyltransferase superfamily. Magnesium protoporphyrin O-methyltransferase family.

The catalysed reaction is Mg-protoporphyrin IX + S-adenosyl-L-methionine = Mg-protoporphyrin IX 13-monomethyl ester + S-adenosyl-L-homocysteine. It participates in porphyrin-containing compound metabolism; bacteriochlorophyll biosynthesis (light-independent). Its function is as follows. Converts Mg-protoporphyrin IX to Mg-protoporphyrin IX methylester using S-adenosyl-L-methionine as a cofactor. In Rhodobacter capsulatus (Rhodopseudomonas capsulata), this protein is Magnesium-protoporphyrin O-methyltransferase (bchM).